We begin with the raw amino-acid sequence, 439 residues long: Xaa-Pro dipeptidase (439 aa).

5 residues coordinate Mn(2+): Asp244, Asp255, His335, Glu380, and Glu419.

Belongs to the peptidase M24B family. Bacterial-type prolidase subfamily. The cofactor is Mn(2+).

It catalyses the reaction Xaa-L-Pro dipeptide + H2O = an L-alpha-amino acid + L-proline. Splits dipeptides with a prolyl residue in the C-terminal position. The protein is Xaa-Pro dipeptidase of Shewanella amazonensis (strain ATCC BAA-1098 / SB2B).